The following is a 46-amino-acid chain: Antimicrobial peptide eNAP-2 (46 aa).

The WAP domain occupies 12–46; the sequence is RPGRCPTVPPGTFGHCACLCTGDASEPKGQKCCSN.

In terms of biological role, has antibiotic activity against several equine uterine pathogens; S.zooepidemicus, E.coli and P.aeruginosa. Highly efficient against S.zoopedemicus. Not active against K.pneumoniae. Selectively inactivates microbial serine proteases (subtilisin A and proteinase K) without inhibiting mammalian serine proteases (human neutrophil elastase, human cathepsin G and bovine pancreatic trypsin). This chain is Antimicrobial peptide eNAP-2, found in Equus caballus (Horse).